The following is a 510-amino-acid chain: GTPase Der (510 aa).

2 consecutive EngA-type G domains span residues leucine 3–alanine 167 and isoleucine 230–threonine 405. Residues glycine 9–serine 16, aspartate 56–phenylalanine 60, asparagine 119–glutamate 122, glycine 236–serine 243, aspartate 283–leucine 287, and serine 348–aspartate 351 each bind GTP. The 85-residue stretch at alanine 406 to lysine 490 folds into the KH-like domain.

The protein belongs to the TRAFAC class TrmE-Era-EngA-EngB-Septin-like GTPase superfamily. EngA (Der) GTPase family. As to quaternary structure, associates with the 50S ribosomal subunit.

In terms of biological role, GTPase that plays an essential role in the late steps of ribosome biogenesis. In Hyphomonas neptunium (strain ATCC 15444), this protein is GTPase Der.